Reading from the N-terminus, the 544-residue chain is Probable protein kinase UbiB (544 aa).

The Protein kinase domain occupies 123–501 (DFDIKPLASA…KRQQGTGKFL (379 aa)). ATP-binding positions include 129–137 (LASASIAQV) and K152. D287 acts as the Proton acceptor in catalysis. The next 2 membrane-spanning stretches (helical) occupy residues 496–516 (GTGKFLFGVGATLVVCSAIWI) and 519–539 (QLEPLAIGSATIGVLCWLLSW).

This sequence belongs to the ABC1 family. UbiB subfamily.

It localises to the cell inner membrane. It participates in cofactor biosynthesis; ubiquinone biosynthesis [regulation]. Is probably a protein kinase regulator of UbiI activity which is involved in aerobic coenzyme Q (ubiquinone) biosynthesis. This chain is Probable protein kinase UbiB, found in Vibrio cholerae serotype O1 (strain ATCC 39315 / El Tor Inaba N16961).